A 425-amino-acid polypeptide reads, in one-letter code: E3 ubiquitin-protein ligase CBLL2 (425 aa).

The RING-type zinc-finger motif lies at cysteine 57 to arginine 97. Residues cysteine 96–arginine 154 form an HYB domain region. The C2H2-type zinc-finger motif lies at phenylalanine 112 to histidine 138. Disordered stretches follow at residues aspartate 241–proline 297 and threonine 382–tyrosine 425. Residues proline 398 to serine 408 are compositionally biased toward pro residues. The span at glycine 412–tyrosine 425 shows a compositional bias: basic residues.

In terms of assembly, homodimer. In terms of tissue distribution, exclusively expressed in testis and sperm, including spermatocytes, round and elongated spermatids, and Leydig cells.

It is found in the cytoplasm. The catalysed reaction is S-ubiquitinyl-[E2 ubiquitin-conjugating enzyme]-L-cysteine + [acceptor protein]-L-lysine = [E2 ubiquitin-conjugating enzyme]-L-cysteine + N(6)-ubiquitinyl-[acceptor protein]-L-lysine.. It participates in protein modification; protein ubiquitination. Functionally, E3 ubiquitin ligase catalyzing the covalent attachment of ubiquitin moieties onto substrate proteins. May operate on tyrosine-phosphorylated SRC substrates. The polypeptide is E3 ubiquitin-protein ligase CBLL2 (Homo sapiens (Human)).